The primary structure comprises 223 residues: Deoxyribose-phosphate aldolase (223 aa).

D91 serves as the catalytic Proton donor/acceptor. Residue K153 is the Schiff-base intermediate with acetaldehyde of the active site. Residue K182 is the Proton donor/acceptor of the active site.

Belongs to the DeoC/FbaB aldolase family. DeoC type 1 subfamily.

The protein resides in the cytoplasm. The catalysed reaction is 2-deoxy-D-ribose 5-phosphate = D-glyceraldehyde 3-phosphate + acetaldehyde. The protein operates within carbohydrate degradation; 2-deoxy-D-ribose 1-phosphate degradation; D-glyceraldehyde 3-phosphate and acetaldehyde from 2-deoxy-alpha-D-ribose 1-phosphate: step 2/2. In terms of biological role, catalyzes a reversible aldol reaction between acetaldehyde and D-glyceraldehyde 3-phosphate to generate 2-deoxy-D-ribose 5-phosphate. The polypeptide is Deoxyribose-phosphate aldolase (Streptococcus pyogenes serotype M28 (strain MGAS6180)).